Consider the following 157-residue polypeptide: Putative pre-16S rRNA nuclease (157 aa).

It belongs to the YqgF nuclease family.

The protein localises to the cytoplasm. Its function is as follows. Could be a nuclease involved in processing of the 5'-end of pre-16S rRNA. In Parasynechococcus marenigrum (strain WH8102), this protein is Putative pre-16S rRNA nuclease.